A 474-amino-acid polypeptide reads, in one-letter code: ATP synthase subunit beta (474 aa).

152–159 (GGAGVGKT) contacts ATP.

Belongs to the ATPase alpha/beta chains family. As to quaternary structure, F-type ATPases have 2 components, CF(1) - the catalytic core - and CF(0) - the membrane proton channel. CF(1) has five subunits: alpha(3), beta(3), gamma(1), delta(1), epsilon(1). CF(0) has three main subunits: a(1), b(2) and c(9-12). The alpha and beta chains form an alternating ring which encloses part of the gamma chain. CF(1) is attached to CF(0) by a central stalk formed by the gamma and epsilon chains, while a peripheral stalk is formed by the delta and b chains.

The protein resides in the cell inner membrane. It carries out the reaction ATP + H2O + 4 H(+)(in) = ADP + phosphate + 5 H(+)(out). Its function is as follows. Produces ATP from ADP in the presence of a proton gradient across the membrane. The catalytic sites are hosted primarily by the beta subunits. The chain is ATP synthase subunit beta from Magnetococcus marinus (strain ATCC BAA-1437 / JCM 17883 / MC-1).